The chain runs to 1400 residues: Alpha-(1-&gt;3)-arabinofuranosyltransferase (1400 aa).

Residues 1–30 form the signal peptide; that stretch reads MAPLSRKWLPVVGAVALALTFAQSPGQVSP. 8 helical membrane-spanning segments follow: residues 67 to 87, 91 to 111, 139 to 159, 179 to 199, 215 to 235, 282 to 302, 314 to 334, and 401 to 421; these read YLFP…PGWV, LWWA…AEAL, ISSE…TILA, VALM…PAVI, AWWL…LTQL, LVTG…GLAG, LVTM…GGLA, and VAVA…AWTG. In terms of domain architecture, F5/8 type C spans 700–883; that stretch reads AEPVVGGWTG…WDLGSELLGR (184 aa). The next 4 helical transmembrane spans lie at 1256–1276, 1297–1317, 1338–1358, and 1369–1389; these read LYRA…LLAF, WAAA…GVMV, VTVG…SRHP, and WASV…SVVA.

Its subcellular location is the membrane. The enzyme catalyses Adds an alpha-D-arabinofuranosyl group from trans,octacis-decaprenylphospho-beta-D-arabinofuranose at the 3-O-position of an alpha-(1-&gt;5)-arabinofuranan chain attached to a beta-(1-&gt;5)-galactofuranan chain.. It functions in the pathway cell wall biogenesis; cell wall polysaccharide biosynthesis. Functionally, involved in the biosynthesis of the arabinogalactan (AG) region of the mycolylarabinogalactan-peptidoglycan (mAGP) complex, an essential component of the mycobacterial cell wall. Catalyzes the addition of an arabinofuranosyl (Araf) residue from the sugar donor decaprenyl-phospho-arabinose (DPA) on the C-3 of an alpha-(1-&gt;5)-linked Araf from the arabinan backbone of AG. This is Alpha-(1-&gt;3)-arabinofuranosyltransferase (aftD) from Mycobacterium tuberculosis (strain ATCC 25618 / H37Rv).